The sequence spans 119 residues: Amicyanin-alpha (119 aa).

Positions 1–20 are cleaved as a signal peptide; that stretch reads MRALAFAAALAAFSATAALA. The region spanning 21 to 119 is the Plastocyanin-like domain; it reads AGALEAVQEA…PFMKGKVVVE (99 aa). 4 residues coordinate Cu cation: histidine 67, cysteine 106, histidine 109, and methionine 112.

The cofactor is Cu cation.

The protein resides in the periplasm. The protein operates within one-carbon metabolism; methylamine degradation. In terms of biological role, primary acceptor of electrons from methylamine dehydrogenase. Passes those electrons on either a soluble cytochrome c or to pseudoazurin. The chain is Amicyanin-alpha (mauC) from Methylorubrum extorquens (strain ATCC 14718 / DSM 1338 / JCM 2805 / NCIMB 9133 / AM1) (Methylobacterium extorquens).